A 3739-amino-acid polypeptide reads, in one-letter code: Pikromycin polyketide synthase component PikAII (3739 aa).

Residues 35-463 (GEPVAIVGMA…GTNAHVVLEE (429 aa)) enclose the Ketosynthase family 3 (KS3) 1 domain. 2 module regions span residues 38–1517 (VAIV…EFLL) and 1542–3642 (VAIV…GHLL). The Acyl-thioester intermediate; for beta-ketoacyl synthase 1 activity role is filled by cysteine 208. Residues histidine 343 and histidine 383 each act as for beta-ketoacyl synthase 1 activity in the active site. Residues 572–877 (FVFPGQGTQW…ERLVTSLAEA (306 aa)) form an acyltransferase 1 region. The Acyl-ester intermediate; for acyltransferase 1 activity role is filled by serine 662. The interval 1150 to 1343 (GTVLVTGAEE…VTSVAWSPWE (194 aa)) is C2-type beta-ketoacyl reductase 1. The active-site For C2-type beta-ketoacyl reductase 1 and probable racemase activities is tyrosine 1313. Residues 1445–1520 (RRMQELVREH…TLAEFLLAEI (76 aa)) form the Carrier 1 domain. O-(pantetheine 4'-phosphoryl)serine is present on serine 1480. The region spanning 1539–1967 (DEPVAIVGMA…GTNAHIVLEE (429 aa)) is the Ketosynthase family 3 (KS3) 2 domain. The active-site Acyl-thioester intermediate; for beta-ketoacyl synthase 2 activity is cysteine 1712. Active-site for beta-ketoacyl synthase 2 activity residues include histidine 1847 and histidine 1887. The acyltransferase 2 stretch occupies residues 2069–2374 (FVFPGQGTQW…HRLTTSLAEA (306 aa)). The Acyl-ester intermediate; for acyltransferase 2 activity role is filled by serine 2159. Residues 2428–2553 (HPLLGAAVAL…GVLAARADRT (126 aa)) form an N-terminal hotdog fold region. The interval 2428–2703 (HPLLGAAVAL…LTVLPVDPAQ (276 aa)) is dehydratase. Positions 2428–2705 (HPLLGAAVAL…VLPVDPAQLA (278 aa)) constitute a PKS/mFAS DH domain. Catalysis depends on histidine 2460, which acts as the Proton acceptor; for dehydratase activity. The interval 2567 to 2705 (AEPVDVDGLY…VLPVDPAQLA (139 aa)) is C-terminal hotdog fold. Aspartate 2629 acts as the Proton donor; for dehydratase activity in catalysis. Residues 2959 to 3267 (GSLESLTAAP…QARHTGKVVL (309 aa)) form an enoyl reductase region. Residue tyrosine 3005 is the For enoyl reductase activity of the active site. Residues 3092–3109 (LLVH…VQLA), 3285–3288 (TGAL), 3309–3312 (SRRG), 3338–3339 (DV), lysine 3388, and 3412–3413 (FS) contribute to the NADP(+) site. A beta-ketoacyl reductase 2 region spans residues 3277 to 3458 (GTVLLTGGTG…LSLGWGLWAE (182 aa)). The active-site For beta-ketoacyl reductase 2 activity is tyrosine 3427. The region spanning 3570-3645 (AHLRDLVRTH…ELAGHLLDEL (76 aa)) is the Carrier 2 domain. The residue at position 3605 (serine 3605) is an O-(pantetheine 4'-phosphoryl)serine.

As to quaternary structure, homodimer. Pikromycin PKS consists of a combination of multimodular (PikAI and PikAII) and monomodular (PikAIII and PikAIV) polypeptides each coding for a functional synthase subunit which participates in 1 (monomodular) or 2 (multimodular) of the six FAS-like elongation steps required for formation of the polyketide. Module 1, 2, 3, 4, 5, and 6 participating in biosynthesis steps 1, 2, 3, 4, 5, and 6, respectively. Pantetheine 4'-phosphate serves as cofactor.

The catalysed reaction is 5 (S)-methylmalonyl-CoA + malonyl-CoA + 5 NADPH + 11 H(+) = 10-deoxymethynolide + 6 CO2 + 5 NADP(+) + 6 CoA + 2 H2O. The enzyme catalyses 6 (S)-methylmalonyl-CoA + malonyl-CoA + 5 NADPH + 12 H(+) = narbonolide + 7 CO2 + 5 NADP(+) + 7 CoA + 2 H2O. It functions in the pathway antibiotic biosynthesis. Involved in the biosynthesis of 12- and 14-membered ring macrolactone antibiotics such as methymycin/neomethymycin and pikromycin/narbomycin, respectively. Component of the pikromycin PKS which catalyzes the biosynthesis of both precursors 10-deoxymethynolide (12-membered ring macrolactone) and narbonolide (14-membered ring macrolactone). Chain elongation through PikAI, PikAII and PikAIII followed by thioesterase catalyzed termination results in the production of 10-deoxymethynolide, while continued elongation through PikAIV, followed by thioesterase (TE) catalyzed cyclization results in the biosynthesis of the narbonolide. This is Pikromycin polyketide synthase component PikAII from Streptomyces venezuelae.